We begin with the raw amino-acid sequence, 1997 residues long: Protein MOR1 (1997 aa).

HEAT repeat units follow at residues 48–86 (DARLREFGPLFKKTVADSNAPVQEKALDALLAFQRAADA) and 164–202 (VVPPKKILKMLPELFDHPDQNVRASSKGLTLELCRWIGK). Residues 236-264 (RKIRSEQEKELEEEVVPEAAGTNNSEEAV) are disordered. HEAT repeat units lie at residues 321 to 359 (PGDFHEICRTLKKLITDVNLAVSVEATQAIGNLAKGLRT), 362 to 400 (SGNSRVLLPVLLEKLKEKKPTMTEALSQTLQAMHKSGCI), and 441 to 479 (LKLHKEYVPICMECLNDGTPEVRDASFSVLTAIAKMVGM). The tract at residues 501–576 (IGSASDTTSG…DGGPQSKASA (76 aa)) is disordered. Residues 504 to 520 (ASDTTSGTVAASNTGVG) show a composition bias toward polar residues. Positions 529-539 (SSSMRRSAASM) are enriched in low complexity. HEAT repeat units follow at residues 848 to 886 (EDISAKITPTLLKNLGSPDWKLRLESIDAVSKIVEEAHK), 890 to 928 (PTGTVELFTALRARLYDSNKNLVMATLSTIGGLASAMGP), 931 to 969 (EKSSKGILADVLKCLGDNKKHMRECTLTALDLWVAAAQL), and 1007 to 1045 (PSEALPLLKPSASSLMDKSSEVRKAAESFMNEILKICGQ). The disordered stretch occupies residues 1087–1115 (MSLPSKAGSKNNKHGPNDRGSNVSKAVSQ). 4 HEAT repeats span residues 1233–1259 (TTCLLKVLDFLPELFDVLKDQSYMLTE), 1260–1294 (AEAAIFLPCLMEKSGHNIEKVREKMGELIKQMVNI), 1295–1332 (YSLPKLLPYILEGLRSKNNRTRIECVDIIGYFMDHHGT), and 1334–1372 (VSGLLKNLPSVAALTAERDGEIRKAALNTLATAYKNLGD). Basic and acidic residues predominate over residues 1400-1410 (MDKRREGRPGD). Residues 1400–1436 (MDKRREGRPGDARAALRRSVRENGSDIAEQSGEAVSR) are disordered. The stretch at 1539-1579 (RSCKYVLNTLMQTFQIKRLAHAVKEGTLDNLITELLLWLLD) is one HEAT 14 repeat. Residues 1755–1776 (MGQTHWGDAGSNNPNPSTHSTD) are disordered. Polar residues predominate over residues 1764-1776 (GSNNPNPSTHSTD).

The protein belongs to the TOG/XMAP215 family.

It localises to the cytoplasm. Its subcellular location is the cytoskeleton. Its function is as follows. Microtubule-associated protein that is essential for cortical microtubules organization and function. The chain is Protein MOR1 (MOR1) from Oryza sativa subsp. japonica (Rice).